The primary structure comprises 446 residues: Exodeoxyribonuclease 7 large subunit (446 aa).

Belongs to the XseA family. Heterooligomer composed of large and small subunits.

Its subcellular location is the cytoplasm. It catalyses the reaction Exonucleolytic cleavage in either 5'- to 3'- or 3'- to 5'-direction to yield nucleoside 5'-phosphates.. Its function is as follows. Bidirectionally degrades single-stranded DNA into large acid-insoluble oligonucleotides, which are then degraded further into small acid-soluble oligonucleotides. The sequence is that of Exodeoxyribonuclease 7 large subunit from Acholeplasma laidlawii (strain PG-8A).